A 400-amino-acid chain; its full sequence is Argininosuccinate synthase (400 aa).

An ATP-binding site is contributed by 8-16 (AYSGGLDTS). An L-citrulline-binding site is contributed by Tyr-87. Gly-117 serves as a coordination point for ATP. Thr-119, Asn-123, and Asp-124 together coordinate L-aspartate. Asn-123 serves as a coordination point for L-citrulline. L-citrulline contacts are provided by Arg-127, Ser-175, Glu-260, and Tyr-272.

It belongs to the argininosuccinate synthase family. Type 1 subfamily. As to quaternary structure, homotetramer.

The protein resides in the cytoplasm. It carries out the reaction L-citrulline + L-aspartate + ATP = 2-(N(omega)-L-arginino)succinate + AMP + diphosphate + H(+). Its pathway is amino-acid biosynthesis; L-arginine biosynthesis; L-arginine from L-ornithine and carbamoyl phosphate: step 2/3. This is Argininosuccinate synthase from Nocardia farcinica (strain IFM 10152).